We begin with the raw amino-acid sequence, 80 residues long: Cytochrome c-553 (80 aa).

Heme c-binding residues include cysteine 13, cysteine 16, histidine 17, and methionine 58.

In terms of processing, binds 1 heme c group covalently per subunit.

The protein localises to the periplasm. In terms of biological role, natural electron acceptor for a formate dehydrogenase. In Desulfomicrobium norvegicum (strain DSM 1741 / NCIMB 8310) (Desulfovibrio baculatus (strain Norway 4)), this protein is Cytochrome c-553.